The chain runs to 699 residues: PTS system glucose-specific EIICBA component (699 aa).

One can recognise a PTS EIIC type-1 domain in the interval 3-424 (KALFGVLQKI…FNLKTPGRED (422 aa)). The next 11 membrane-spanning stretches (helical) occupy residues 16–36 (LMLP…GNAM), 66–86 (IVFD…LANG), 89–109 (VAGI…SAVL), 139–159 (IPTL…AALL), 180–200 (FVPI…LVIW), 233–253 (LIPF…FFSY), 283–303 (FMTG…LAIY), 313–333 (LVAG…ITEP), 338–358 (FLFV…LSFM), 365–385 (VKIG…GILP), and 388–408 (TAWW…YFGF). The 82-residue stretch at 439–520 (GDLPYEILQA…QDIIAGRKPR (82 aa)) folds into the PTS EIIB type-1 domain. Residue Cys-461 is the Phosphocysteine intermediate; for EIIB activity of the active site. The 105-residue stretch at 568–672 (DQVFSGKMMG…SLMTPIVFTN (105 aa)) folds into the PTS EIIA type-1 domain. His-620 functions as the Tele-phosphohistidine intermediate; for EIIA activity in the catalytic mechanism.

It localises to the cell membrane. The catalysed reaction is N(pros)-phospho-L-histidyl-[protein] + D-glucose(out) = D-glucose 6-phosphate(in) + L-histidyl-[protein]. It carries out the reaction D-glucosamine(out) + N(pros)-phospho-L-histidyl-[protein] = D-glucosamine 6-phosphate(in) + L-histidyl-[protein]. In terms of biological role, the phosphoenolpyruvate-dependent sugar phosphotransferase system (sugar PTS), a major carbohydrate active transport system, catalyzes the phosphorylation of incoming sugar substrates concomitantly with their translocation across the cell membrane. This system is involved in glucose transport. The system can also transport glucosamine. Its function is as follows. In addition, plays an important role in the phosphorylation of EIIA-deficient PTS transporters. The EIIA domain can transfer a phosphoryl group to EIIA-deficient PTS transporters, enabling growth with maltose, N-acetylglucosamine, sucrose or trehalose as the sole carbon source. The chain is PTS system glucose-specific EIICBA component (ptsG) from Bacillus subtilis (strain 168).